Here is a 161-residue protein sequence, read N- to C-terminus: UPF0262 protein SPOA0072 (161 aa).

Residues 1-21 (MTMSRISHIELDDSNLPPPTP) are disordered.

This sequence belongs to the UPF0262 family.

This Ruegeria pomeroyi (strain ATCC 700808 / DSM 15171 / DSS-3) (Silicibacter pomeroyi) protein is UPF0262 protein SPOA0072.